Here is a 715-residue protein sequence, read N- to C-terminus: 1,4-alpha-glucan branching enzyme GlgB (715 aa).

Asp396 (nucleophile) is an active-site residue. The active-site Proton donor is Glu449.

The protein belongs to the glycosyl hydrolase 13 family. GlgB subfamily. As to quaternary structure, monomer.

The enzyme catalyses Transfers a segment of a (1-&gt;4)-alpha-D-glucan chain to a primary hydroxy group in a similar glucan chain.. Its pathway is glycan biosynthesis; glycogen biosynthesis. Functionally, catalyzes the formation of the alpha-1,6-glucosidic linkages in glycogen by scission of a 1,4-alpha-linked oligosaccharide from growing alpha-1,4-glucan chains and the subsequent attachment of the oligosaccharide to the alpha-1,6 position. The sequence is that of 1,4-alpha-glucan branching enzyme GlgB from Vibrio vulnificus (strain CMCP6).